The following is a 910-amino-acid chain: Protein translocase subunit SecA (910 aa).

ATP is bound by residues glutamine 87, 105–109 (GEGKT), and aspartate 508. Basic and acidic residues predominate over residues 558–568 (RHESRRIDNQL). Disordered stretches follow at residues 558 to 580 (RHES…DPGS) and 873 to 910 (AAQQ…GQLS). Cysteine 894, cysteine 896, cysteine 905, and histidine 906 together coordinate Zn(2+). Residues 900-910 (KKYKHCHGQLS) are compositionally biased toward basic residues.

It belongs to the SecA family. Monomer and homodimer. Part of the essential Sec protein translocation apparatus which comprises SecA, SecYEG and auxiliary proteins SecDF-YajC and YidC. Zn(2+) serves as cofactor.

It localises to the cell inner membrane. The protein resides in the cytoplasm. It catalyses the reaction ATP + H2O + cellular proteinSide 1 = ADP + phosphate + cellular proteinSide 2.. Part of the Sec protein translocase complex. Interacts with the SecYEG preprotein conducting channel. Has a central role in coupling the hydrolysis of ATP to the transfer of proteins into and across the cell membrane, serving both as a receptor for the preprotein-SecB complex and as an ATP-driven molecular motor driving the stepwise translocation of polypeptide chains across the membrane. The chain is Protein translocase subunit SecA from Stenotrophomonas maltophilia (strain R551-3).